A 216-amino-acid polypeptide reads, in one-letter code: A-type ATP synthase subunit D (216 aa).

Belongs to the V-ATPase D subunit family. As to quaternary structure, has multiple subunits with at least A(3), B(3), C, D, E, F, H, I and proteolipid K(x). In terms of processing, the N-terminus is blocked.

It localises to the cell membrane. Component of the A-type ATP synthase that produces ATP from ADP in the presence of a proton gradient across the membrane. The sequence is that of A-type ATP synthase subunit D from Sulfurisphaera tokodaii (strain DSM 16993 / JCM 10545 / NBRC 100140 / 7) (Sulfolobus tokodaii).